The following is a 329-amino-acid chain: Small ribosomal subunit protein RACK1 (329 aa).

7 WD repeats span residues 19-59 (GHNG…ATSP), 68-107 (GHSH…STRL), 110-149 (GHTQ…KFTL), 154-193 (AHQD…CNHT), 196-235 (DHTG…PLYK), 237-275 (EARN…VLAE), and 295-328 (PKAP…KSSS).

This sequence belongs to the WD repeat G protein beta family. Ribosomal protein RACK1 subfamily.

The protein is Small ribosomal subunit protein RACK1 (gpbB) of Dictyostelium discoideum (Social amoeba).